We begin with the raw amino-acid sequence, 528 residues long: Sulfhydryl oxidase 1 (528 aa).

Residues 1 to 19 (MSLIHLFLLLGLLSLEAAA) form the signal peptide. The Thioredoxin domain maps to 35–170 (NVADQKDNAI…LLNWINKQIG (136 aa)). The N-linked (GlcNAc...) asparagine glycan is linked to Asn47. Active-site nucleophile residues include Cys72 and Cys75. Residues Cys72 and Cys75 are joined by a disulfide bond. N-linked (GlcNAc...) asparagine glycans are attached at residues Asn186 and Asn297. A disulfide bridge links Cys292 with Cys304. Residues 295 to 397 (SKNETRGFSC…GDPKFPKMIW (103 aa)) enclose the ERV/ALR sulfhydryl oxidase domain. FAD-binding positions include Arg300, Trp307, His311, Asp341, His345, 368 to 375 (WSTHNKVN), Lys394, and Trp397. Cys339 and Cys342 are oxidised to a cystine. Residues Cys403 and Cys406 are joined by a disulfide bond.

Requires FAD as cofactor. Highly expressed in roots.

It is found in the secreted. Its subcellular location is the cell wall. It carries out the reaction 2 R'C(R)SH + O2 = R'C(R)S-S(R)CR' + H2O2. Sulfhydryl oxidase involved in the regulation of cation homeostasis. Positively regulates shoot accumulation of K(+) and inhibits accumulation of toxic cations. Acts at the level of root K(+) efflux systems involved in xylem loading (root symplast-xylem interface). In Arabidopsis thaliana (Mouse-ear cress), this protein is Sulfhydryl oxidase 1 (QSOX1).